A 313-amino-acid chain; its full sequence is Type I restriction enzyme EcoprrI endonuclease subunit (313 aa).

It belongs to the HsdR family. As to quaternary structure, the type I restriction/modification system is composed of three polypeptides R, M and S; the restriction enzyme has stoichiometry R(2)M(2)S(1) while the methyltransferase is M(2)S(1).

The enzyme catalyses Endonucleolytic cleavage of DNA to give random double-stranded fragments with terminal 5'-phosphates, ATP is simultaneously hydrolyzed.. In terms of biological role, the subtype C restriction (R) subunit of a type I restriction enzyme that recognizes 5'-CCAN(7)RTGC-3' and cleaves a random distance away. The R subunit is required for both endonuclease and ATPase activities but not for modification. Cleaves only non-methylated DNA, hemi-methylated and fully methylated DNA are not substrates. After locating a non-methylated recognition site, the enzyme complex serves as a molecular motor that translocates DNA in an ATP-dependent manner until a collision occurs that triggers cleavage. The prr locus restricts phage T4 mutants lacking polynucleotide kinase or RNA ligase; T4 mutants lacking these genes manifest a T4-induced anticodon nuclease (ACNase). This is a putative 'masking-agent' for the ACNase encoded by prrC. It is thought that Stp and other T4-encoded ACNase factors counteract the masking agents, thus activating the latent ACNase. This is Type I restriction enzyme EcoprrI endonuclease subunit from Escherichia coli.